Consider the following 402-residue polypeptide: MDRRVVITGMGGLCGLGTDTTSIWKWMREGRSAIGPLLNTELHGLKGIVGAEVKALPDHNIDRKQLVSMDRISVLAVIAAHEAMRQAGLSCNEGNALRFGATVGVGLGGWDATEKAYRTLLVDGGTRTEIFTGVKAMPSAAACQVSMSLGLRGPVFGVTSACSSANHAIASAVDQIKCGRADVMLAGGSDAPLVWIVLKAWEAMRALAPDTCRPFSAGRKGVVLGEGAGMAVLESYEHATARGATILAEVAGVGLSADAFHITAPAVHGPESAMRACLADAGLNAEDVDYLNAHGTGTKANDQNETTAIKRVFGDHAYSMSISSTKSTHAHCIGAASALEMIACVMAIQEGVVPPTANYREPDPDCDLDVTPNVPRERKVRVAMSNAFAMGGTNAVLAFKQV.

In terms of domain architecture, Ketosynthase family 3 (KS3) spans 2-401; the sequence is DRRVVITGMG…GTNAVLAFKQ (400 aa). Catalysis depends on for beta-ketoacyl synthase activity residues C162, H294, and H331. Residues 329-348 form a helical membrane-spanning segment; sequence HAHCIGAASALEMIACVMAI.

It belongs to the thiolase-like superfamily. Beta-ketoacyl-ACP synthases family.

It is found in the cell inner membrane. Proposed to synthesize NOD factor fatty acyl chain. Involved in the synthesis of a highly unsaturated fatty acid moiety, which forms part of a lipo-oligosaccharide that is responsible for host specificity. This Rhizobium meliloti (strain 1021) (Ensifer meliloti) protein is Nodulation protein E (nodE).